A 344-amino-acid polypeptide reads, in one-letter code: N,N-dimethyltransferase OxyT (344 aa).

Residues Asp205 and 231–233 (GDF) each bind S-adenosyl-L-methionine.

Belongs to the class I-like SAM-binding methyltransferase superfamily. Cation-independent O-methyltransferase family.

It carries out the reaction 4-amino-4-dedimethylamino-anhydrotetracycline + S-adenosyl-L-methionine = 4-methylamino-4-dedimethylamino-anhydrotetracycline + S-adenosyl-L-homocysteine + H(+). The catalysed reaction is 4-methylamino-4-dedimethylamino-anhydrotetracycline + S-adenosyl-L-methionine = anhydrotetracycline + S-adenosyl-L-homocysteine + H(+). It functions in the pathway antibiotic biosynthesis; oxytetracycline biosynthesis. In terms of biological role, involved in the biosynthesis of the tetracycline antibiotic, oxytetracycline. Catalyzes the dimethylation of 4-amino-4-de(dimethylamino)anhydrotetracycline (4-amino-ATC) to yield anhydrotetracycline (ATC). Also able to catalyze the dimethylation of 7-chloro-, 6-demethyl-, 2-decarboxamido-2-nitrile-, and 4-methylamino-derivatives of 4-amino-4-de(dimethylamino)anhydrotetracycline. The chain is N,N-dimethyltransferase OxyT from Streptomyces rimosus.